Consider the following 319-residue polypeptide: Ferrochelatase (319 aa).

Fe cation is bound by residues His-192 and Glu-271.

The protein belongs to the ferrochelatase family.

The protein resides in the cytoplasm. The catalysed reaction is heme b + 2 H(+) = protoporphyrin IX + Fe(2+). Its pathway is porphyrin-containing compound metabolism; protoheme biosynthesis; protoheme from protoporphyrin-IX: step 1/1. Catalyzes the ferrous insertion into protoporphyrin IX. This Geotalea daltonii (strain DSM 22248 / JCM 15807 / FRC-32) (Geobacter daltonii) protein is Ferrochelatase.